A 249-amino-acid polypeptide reads, in one-letter code: Probable WRKY transcription factor 64 (249 aa).

Positions 97-165 (SPTPRPDDGF…YLGKHVCKAV (69 aa)) form a DNA-binding region, WRKY.

Belongs to the WRKY group III family.

It is found in the nucleus. Transcription factor. Interacts specifically with the W box (5'-(T)TGAC[CT]-3'), a frequently occurring elicitor-responsive cis-acting element. This Arabidopsis thaliana (Mouse-ear cress) protein is Probable WRKY transcription factor 64 (WRKY64).